The sequence spans 423 residues: Mannose-6-phosphate isomerase (423 aa).

Position 2 is an N-acetylalanine (Ala-2). A phosphoserine mark is found at Ser-102 and Ser-108. Zn(2+) is bound by residues Gln-110, His-112, Glu-137, and His-276. Arg-295 is a catalytic residue.

This sequence belongs to the mannose-6-phosphate isomerase type 1 family. Zn(2+) is required as a cofactor. Expressed in all tissues, but more abundant in testis.

The protein localises to the cytoplasm. The enzyme catalyses D-mannose 6-phosphate = D-fructose 6-phosphate. It participates in nucleotide-sugar biosynthesis; GDP-alpha-D-mannose biosynthesis; alpha-D-mannose 1-phosphate from D-fructose 6-phosphate: step 1/2. Isomerase that catalyzes the interconversion of fructose-6-P and mannose-6-P and has a critical role in the supply of D-mannose derivatives required for many eukaryotic glycosylation reactions. This Mus musculus (Mouse) protein is Mannose-6-phosphate isomerase.